The primary structure comprises 58 residues: Cholecystokinins (58 aa).

Sulfotyrosine is present on Tyr52. Residue Phe58 is modified to Phenylalanine amide.

The protein belongs to the gastrin/cholecystokinin family. As to quaternary structure, binds to CCK-A receptors in the pancreas and CCK-B receptors in the brain. cholecystokinin 8 binds CCK-A receptors more potently than cholecystokinin 58, cholecystokinin 8 and cholecystokinin 58 bind CCK-B receptors with equal affinity. In terms of processing, the precursor is cleaved by proteases to produce a number of active cholecystokinins. Cholecystokinin 58 occurs in both sulfated (CCK58(s)) and nonsulfated (CCK58(ns)) forms, which differ in their receptor-binding activities. CCK58(s) binds to the CCK-A receptor with high affinity, CCK58(ns) binds poorly to the CCK-A receptor. CCK58(s) and CCK58(ns) both bind the CCK-B receptor. Post-translationally, the precursor is cleaved by ACE, which removes the Gly-Arg-Arg peptide at the C-terminus, leading to mature hormone.

The protein resides in the secreted. Its function is as follows. This peptide hormone induces gall bladder contraction and the release of pancreatic enzymes in the gut. Its function in the brain is not clear. Binding to CCK-A receptors stimulates amylase release from the pancreas, binding to CCK-B receptors stimulates gastric acid secretion. cholecystokinin 58 and cholecystokinin 8, but not cholecystokinin 58 desnonopeptide, stimulate amylase release from the pancreas. cholecystokinin 58, but not cholecystokinin 8, increases bile-pancreatic volume. This is Cholecystokinins from Canis lupus familiaris (Dog).